The primary structure comprises 336 residues: Porphobilinogen deaminase (336 aa).

An S-(dipyrrolylmethanemethyl)cysteine modification is found at cysteine 251. Serine 327 and serine 329 each carry phosphoserine.

Belongs to the HMBS family. Requires dipyrromethane as cofactor.

It catalyses the reaction 4 porphobilinogen + H2O = hydroxymethylbilane + 4 NH4(+). The protein operates within porphyrin-containing compound metabolism; protoporphyrin-IX biosynthesis; coproporphyrinogen-III from 5-aminolevulinate: step 2/4. Functionally, tetrapolymerization of the monopyrrole PBG into the hydroxymethylbilane pre-uroporphyrinogen in several discrete steps. The polypeptide is Porphobilinogen deaminase (hem3) (Schizosaccharomyces pombe (strain 972 / ATCC 24843) (Fission yeast)).